The chain runs to 376 residues: Alanine racemase (376 aa).

Residue lysine 40 is the Proton acceptor; specific for D-alanine of the active site. An N6-(pyridoxal phosphate)lysine modification is found at lysine 40. Arginine 138 is a binding site for substrate. Catalysis depends on tyrosine 270, which acts as the Proton acceptor; specific for L-alanine. Methionine 317 provides a ligand contact to substrate.

The protein belongs to the alanine racemase family. The cofactor is pyridoxal 5'-phosphate.

The enzyme catalyses L-alanine = D-alanine. The protein operates within amino-acid biosynthesis; D-alanine biosynthesis; D-alanine from L-alanine: step 1/1. In terms of biological role, catalyzes the interconversion of L-alanine and D-alanine. May also act on other amino acids. The polypeptide is Alanine racemase (alr) (Lactobacillus gasseri (strain ATCC 33323 / DSM 20243 / BCRC 14619 / CIP 102991 / JCM 1131 / KCTC 3163 / NCIMB 11718 / NCTC 13722 / AM63)).